The sequence spans 473 residues: ATP synthase subunit beta, chloroplastic (473 aa).

ATP is bound at residue 172–179 (GGAGVGKT).

It belongs to the ATPase alpha/beta chains family. F-type ATPases have 2 components, CF(1) - the catalytic core - and CF(0) - the membrane proton channel. CF(1) has five subunits: alpha(3), beta(3), gamma(1), delta(1), epsilon(1). CF(0) has four main subunits: a(1), b(1), b'(1) and c(9-12).

The protein localises to the plastid. The protein resides in the chloroplast thylakoid membrane. It carries out the reaction ATP + H2O + 4 H(+)(in) = ADP + phosphate + 5 H(+)(out). In terms of biological role, produces ATP from ADP in the presence of a proton gradient across the membrane. The catalytic sites are hosted primarily by the beta subunits. This Pteridium esculentum (Bracken fern) protein is ATP synthase subunit beta, chloroplastic.